A 146-amino-acid polypeptide reads, in one-letter code: Myoglobin (146 aa).

The Globin domain occupies 2–140; it reads ADLDAVLKCW…VIADLEANYK (139 aa). His59 is a nitrite binding site. Position 59 (His59) interacts with O2. Heme b is bound at residue His88.

Belongs to the globin family. In terms of assembly, monomeric.

Its subcellular location is the cytoplasm. It localises to the sarcoplasm. It carries out the reaction Fe(III)-heme b-[protein] + nitric oxide + H2O = Fe(II)-heme b-[protein] + nitrite + 2 H(+). The catalysed reaction is H2O2 + AH2 = A + 2 H2O. Functionally, monomeric heme protein which primary function is to store oxygen and facilitate its diffusion within muscle tissues. Reversibly binds oxygen through a pentacoordinated heme iron and enables its timely and efficient release as needed during periods of heightened demand. Depending on the oxidative conditions of tissues and cells, and in addition to its ability to bind oxygen, it also has a nitrite reductase activity whereby it regulates the production of bioactive nitric oxide. Under stress conditions, like hypoxia and anoxia, it also protects cells against reactive oxygen species thanks to its pseudoperoxidase activity. In Katsuwonus pelamis (Skipjack tuna), this protein is Myoglobin (mb).